Here is a 256-residue protein sequence, read N- to C-terminus: Short-chain dehydrogenase/reductase cdmF (256 aa).

Residues V11, D57, and R119 each contribute to the NADP(+) site. The Proton donor role is filled by S137. Residues Y151, K155, G183, and N187 each contribute to the NADP(+) site. Y151 (proton acceptor) is an active-site residue. K155 (lowers pKa of active site Tyr) is an active-site residue.

The protein belongs to the short-chain dehydrogenases/reductases (SDR) family.

It catalyses the reaction 3-hydroxypentacecilide A + A = chrodrimanin C + AH2. The enzyme catalyses chrodrimanin F + A = chrodrimanin H + AH2. It participates in secondary metabolite biosynthesis; terpenoid biosynthesis. Its function is as follows. Short-chain dehydrogenase/reductase; part of the gene cluster that mediates the biosynthesis of chrodrimanin B, a meroterpenoid that acts as a potent blocker of insect GABA-gated chloride channels. The first step of the pathway is the biosynthesis of 6-hydroxymellein by the polyketide synthase cdmE. The prenyltransferase cdmH acts as a 6-hydroxymellein 5-farnesyltransferase and produces the hydrophobic metabolite verruculide C. The FAD-dependent monooxygenase cdmI further converts verruculide C into verruculide B. The terpene cyclase cdmG then produced the pentacyclic molecule 3-hydroxypentacecilide A, the backbone structure of chrodrimanin B, via folding the farnesyl moiety of the substrate into the chair-boat conformation. The short-chain dehydrogenase/reductase cdmF functions as the 3-OH dehydrogenase that oxidizes the C-3 hydroxyl group of 3-hydroxypentacecilide A and produces chrodrimanin C, the dehydrogenated product of 3-hydroxypentacecilide A. The cytochrome P450 monooxygenase cdmJ then accepts both 3-hydroxypentacecilide A and chrodrimanin C and functions as a C-7-beta-hydroxylase to produce respectively chrodrimanin H and chrodrimanin F. The dioxygenase cdmA accepts chrodrimanin H to afford chrodrimanin E, which is further transformed to chrodrimanin A by the dioxygenase cdmD. CdmA can also accept chrodrimanin C as substrate to convert it into verruculide A, which is further converted into chrodrimanin T by cdmD. The last step of the biosynthesis is proposed to be performed by the acetyltransferase cdmC which acetylates chrodrimanin A to yield chrodrimanin B. The pathway may also lead to the production of additional shunt products, including chrodrimanins T and U. In Talaromyces verruculosus (Penicillium verruculosum), this protein is Short-chain dehydrogenase/reductase cdmF.